A 176-amino-acid chain; its full sequence is ATP-dependent protease subunit HslV (176 aa).

The active site involves Thr2. Na(+) is bound by residues Gly157, Cys160, and Thr163.

The protein belongs to the peptidase T1B family. HslV subfamily. In terms of assembly, a double ring-shaped homohexamer of HslV is capped on each side by a ring-shaped HslU homohexamer. The assembly of the HslU/HslV complex is dependent on binding of ATP.

It is found in the cytoplasm. It catalyses the reaction ATP-dependent cleavage of peptide bonds with broad specificity.. With respect to regulation, allosterically activated by HslU binding. Functionally, protease subunit of a proteasome-like degradation complex believed to be a general protein degrading machinery. The sequence is that of ATP-dependent protease subunit HslV from Salmonella agona (strain SL483).